A 392-amino-acid polypeptide reads, in one-letter code: Succinate--CoA ligase [ADP-forming] subunit beta (392 aa).

The 240-residue stretch at 9–248 (KGLFRDYGVS…LHEEDPTEVK (240 aa)) folds into the ATP-grasp domain. ATP contacts are provided by residues Lys50, 57–59 (GRG), Val106, and Glu111. Residues Asn203 and Asp217 each contribute to the Mg(2+) site. Residues Asn268 and 325 to 327 (GIV) contribute to the substrate site.

This sequence belongs to the succinate/malate CoA ligase beta subunit family. In terms of assembly, heterotetramer of two alpha and two beta subunits. It depends on Mg(2+) as a cofactor.

It catalyses the reaction succinate + ATP + CoA = succinyl-CoA + ADP + phosphate. The catalysed reaction is GTP + succinate + CoA = succinyl-CoA + GDP + phosphate. It functions in the pathway carbohydrate metabolism; tricarboxylic acid cycle; succinate from succinyl-CoA (ligase route): step 1/1. In terms of biological role, succinyl-CoA synthetase functions in the citric acid cycle (TCA), coupling the hydrolysis of succinyl-CoA to the synthesis of either ATP or GTP and thus represents the only step of substrate-level phosphorylation in the TCA. The beta subunit provides nucleotide specificity of the enzyme and binds the substrate succinate, while the binding sites for coenzyme A and phosphate are found in the alpha subunit. In Salinibacter ruber (strain DSM 13855 / M31), this protein is Succinate--CoA ligase [ADP-forming] subunit beta.